The primary structure comprises 355 residues: Aromatic amino acid aminotransferase (355 aa).

Lys-217 is modified (N6-(pyridoxal phosphate)lysine).

The protein belongs to the class-II pyridoxal-phosphate-dependent aminotransferase family. Homodimer. Pyridoxal 5'-phosphate is required as a cofactor.

The catalysed reaction is an aromatic L-alpha-amino acid + 2-oxoglutarate = an aromatic oxo-acid + L-glutamate. In terms of biological role, aminotransferase that catalyzes the conversion of aromatic amino acids and 2-oxoglutarate into corresponding aromatic oxo acids and L-glutamate. The protein is Aromatic amino acid aminotransferase of Mycobacterium avium (strain 104).